We begin with the raw amino-acid sequence, 896 residues long: Zinc finger protein 574 (896 aa).

2 C2H2-type zinc fingers span residues 16–38 and 76–98; these read YVCS…QNSH and YQCL…QELH. Phosphoserine is present on Ser113. A C2H2-type 3 zinc finger spans residues 126–148; that stretch reads YECVDCKALFASQELWLNHRQTH. A Phosphoserine modification is found at Ser164. The C2H2-type 4 zinc-finger motif lies at 214-236; the sequence is YKCSECSQLFQLPADFLEHQATH. The segment at 239–301 is disordered; the sequence is APVPESQEPA…RARRNNSGEA (63 aa). The span at 247–257 shows a compositional bias: polar residues; sequence PALQQEVQASS. A compositionally biased stretch (basic and acidic residues) spans 274 to 287; the sequence is HSYELRNGEAIGRD. At Ser298 the chain carries Phosphoserine. C2H2-type zinc fingers lie at residues 309–331, 336–358, 364–386, and 392–413; these read LFCS…LRSH, FKCP…LGDH, FLCV…RRAH, and HSCP…RRTH. Positions 434-460 are disordered; it reads FPEPAPAETGEPEAPEPPVSEETSAGP. A C2H2-type 9 zinc finger spans residues 466 to 489; it reads YRCLLCSREFGKALQLTRHQRFVH. The C2H2-type 10; degenerate zinc-finger motif lies at 495-517; the sequence is HKCSICGKMFKKKSHVRNHLRTH. 4 consecutive C2H2-type zinc fingers follow at residues 523–545, 551–573, 579–601, and 607–630; these read FPCP…RLTH, YRCG…RLVH, YRCQ…RYHH, and YKCR…LVVH. Residues 636-659 form a C2H2-type 15; degenerate zinc finger; that stretch reads HRCPSCGAAFPSSLRLREHRCAAA. The C2H2-type 16 zinc-finger motif lies at 667–689; sequence FECGTCGKKVGSAARLQAHEAAH. The segment at 687–733 is disordered; sequence AAHAAAGPGEVLAKEPPAPRAPRATRAPVASPAALGSTATASPAAPA. Positions 707 to 732 are enriched in low complexity; it reads APRATRAPVASPAALGSTATASPAAP. Phosphoserine is present on Ser717. Residue Thr724 is modified to Phosphothreonine. The residue at position 728 (Ser728) is a Phosphoserine. 4 consecutive C2H2-type zinc fingers follow at residues 738–760, 766–788, 794–816, and 822–844; these read LECS…RRIH, YPCP…RRLH, FACE…RRIH, and YSCP…RKTH. The residue at position 832 (Arg832) is an Asymmetric dimethylarginine.

The protein belongs to the krueppel C2H2-type zinc-finger protein family.

The protein localises to the nucleus. Functionally, may be involved in transcriptional regulation. The protein is Zinc finger protein 574 (ZNF574) of Homo sapiens (Human).